The primary structure comprises 365 residues: Zinc transporter 7 (365 aa).

An N-terminal signal peptide occupies residues 1 to 26 (MAYSKACYKLTTITILLLSFTLPSLA). At 27-56 (GNAENADVSECKAESGDLSCHNNKEAQKLK) the chain is on the extracellular side. The chain crosses the membrane as a helical span at residues 57-77 (IIAIPSILVASMIGVSLPLFS). Residues 78–90 (RSIPALGPDREMS) lie on the Cytoplasmic side of the membrane. A helical transmembrane segment spans residues 91 to 111 (VIVKTLASGVILATGFMHVLP). The Extracellular segment spans residues 112–129 (DSFDDLTSKCLPEDPWQK). Residues 130–150 (FPFATFITMISALLVLMIESF) form a helical membrane-spanning segment. The Cytoplasmic segment spans residues 151 to 210 (AMCAYARRTSKREGEVVPLENGSNSVDTQNDIQTLENGSSYVEKQEKVNEDKTSELLRNK). A helical membrane pass occupies residues 211-231 (VIAQILELGIVVHSVVIGLAM). Over 232-242 (GASDNKCTVQS) the chain is Extracellular. Residues 243–263 (LIAALCFHQLFEGMGLGGSIL) form a helical membrane-spanning segment. Residues 264 to 272 (QAQFKSKTN) are Cytoplasmic-facing. A helical transmembrane segment spans residues 273–293 (WTMVFFFSVTTPFGIVLGMAI). Residues 294–304 (QKIYDETSPTA) lie on the Extracellular side of the membrane. Residues 305–325 (LIVVGVLNACSAGLLIYMALV) form a helical membrane-spanning segment. The Cytoplasmic segment spans residues 326–344 (NLLAHEFFGPKIQGNIKLH). A helical membrane pass occupies residues 345–365 (VLGYVATFTGAAGMSLMAKWA).

Belongs to the ZIP transporter (TC 2.A.5) family.

It localises to the cell membrane. Its function is as follows. Probably mediates zinc uptake from the rhizosphere. The protein is Zinc transporter 7 (ZIP7) of Arabidopsis thaliana (Mouse-ear cress).